The primary structure comprises 498 residues: Lysine--tRNA ligase (498 aa).

Residues glutamate 408 and glutamate 415 each coordinate Mg(2+).

This sequence belongs to the class-II aminoacyl-tRNA synthetase family. Homodimer. Mg(2+) is required as a cofactor.

Its subcellular location is the cytoplasm. It catalyses the reaction tRNA(Lys) + L-lysine + ATP = L-lysyl-tRNA(Lys) + AMP + diphosphate. The protein is Lysine--tRNA ligase of Listeria innocua serovar 6a (strain ATCC BAA-680 / CLIP 11262).